A 456-amino-acid chain; its full sequence is Bifunctional protein GlmU (456 aa).

The pyrophosphorylase stretch occupies residues 1–229; the sequence is MLNNAMSVVI…LSEVEGVNNR (229 aa). UDP-N-acetyl-alpha-D-glucosamine contacts are provided by residues 11 to 14, K25, Q76, 81 to 82, 103 to 105, G140, E154, N169, and N227; these read LAAG, GT, and YGD. D105 contacts Mg(2+). N227 contacts Mg(2+). The linker stretch occupies residues 230 to 250; sequence LQLSRLERVYQSEQAEKLLLA. The interval 251–456 is N-acetyltransferase; the sequence is GVMLRDPARF…EGWRRPVKKK (206 aa). UDP-N-acetyl-alpha-D-glucosamine is bound by residues R333 and K351. The active-site Proton acceptor is the H363. Positions 366 and 377 each coordinate UDP-N-acetyl-alpha-D-glucosamine. Residues A380, 386–387, S405, A423, and R440 each bind acetyl-CoA; that span reads NY.

This sequence in the N-terminal section; belongs to the N-acetylglucosamine-1-phosphate uridyltransferase family. In the C-terminal section; belongs to the transferase hexapeptide repeat family. Homotrimer. Requires Mg(2+) as cofactor.

Its subcellular location is the cytoplasm. It carries out the reaction alpha-D-glucosamine 1-phosphate + acetyl-CoA = N-acetyl-alpha-D-glucosamine 1-phosphate + CoA + H(+). The enzyme catalyses N-acetyl-alpha-D-glucosamine 1-phosphate + UTP + H(+) = UDP-N-acetyl-alpha-D-glucosamine + diphosphate. It functions in the pathway nucleotide-sugar biosynthesis; UDP-N-acetyl-alpha-D-glucosamine biosynthesis; N-acetyl-alpha-D-glucosamine 1-phosphate from alpha-D-glucosamine 6-phosphate (route II): step 2/2. Its pathway is nucleotide-sugar biosynthesis; UDP-N-acetyl-alpha-D-glucosamine biosynthesis; UDP-N-acetyl-alpha-D-glucosamine from N-acetyl-alpha-D-glucosamine 1-phosphate: step 1/1. The protein operates within bacterial outer membrane biogenesis; LPS lipid A biosynthesis. Functionally, catalyzes the last two sequential reactions in the de novo biosynthetic pathway for UDP-N-acetylglucosamine (UDP-GlcNAc). The C-terminal domain catalyzes the transfer of acetyl group from acetyl coenzyme A to glucosamine-1-phosphate (GlcN-1-P) to produce N-acetylglucosamine-1-phosphate (GlcNAc-1-P), which is converted into UDP-GlcNAc by the transfer of uridine 5-monophosphate (from uridine 5-triphosphate), a reaction catalyzed by the N-terminal domain. The chain is Bifunctional protein GlmU from Shigella boydii serotype 4 (strain Sb227).